The primary structure comprises 1091 residues: Sodium/potassium exporting P-type ATPase 2 (1091 aa).

The Cytoplasmic segment spans residues Met1–Lys63. A helical transmembrane segment spans residues Ala64 to Ile84. Residues Ser85–Asp90 lie on the Extracellular side of the membrane. The helical transmembrane segment at Trp91–Gln111 threads the bilayer. Over Glu112–Lys282 the chain is Cytoplasmic. The helical transmembrane segment at Leu283–Ala303 threads the bilayer. Over Ser304 to Arg312 the chain is Extracellular. The chain crosses the membrane as a helical span at residues Val313–Leu333. At Thr334–Phe815 the chain is on the cytoplasmic side. The active-site 4-aspartylphosphate intermediate is the Asp369. Mg(2+) is bound by residues Asp369 and Thr371. The ATP site is built by Thr371 and Glu483. The tract at residues Ala499–Gly525 is disordered. The span at Glu503–Gln519 shows a compositional bias: polar residues. Positions 561, 606, 673, 674, 675, 732, and 738 each coordinate ATP. A Mg(2+)-binding site is contributed by Asp757. ATP is bound at residue Asn760. A helical membrane pass occupies residues Val816 to Phe836. The Extracellular segment spans residues Arg837–Ser848. The chain crosses the membrane as a helical span at residues Pro849 to Leu869. The Cytoplasmic portion of the chain corresponds to Glu870–Glu885. The helical transmembrane segment at Val886–Gly906 threads the bilayer. Residues Ser907–Arg943 lie on the Extracellular side of the membrane. Residues Ser944 to Met964 form a helical membrane-spanning segment. Topologically, residues Arg965–Phe991 are cytoplasmic. A helical transmembrane segment spans residues Leu992–Ile1012. The Extracellular portion of the chain corresponds to Asn1013–Pro1021. Residues Ile1022–Leu1042 traverse the membrane as a helical segment. Topologically, residues Tyr1043–Gln1091 are cytoplasmic.

Belongs to the cation transport ATPase (P-type) (TC 3.A.3) family. Type IID subfamily. The cofactor is Mg(2+). The active site is phosphorylated in presence of sodium or potassium and in conditions of higher pH. Not phosphorylated in presence of calcium ions.

Its subcellular location is the cell membrane. The enzyme catalyses Na(+)(in) + ATP + H2O = Na(+)(out) + ADP + phosphate + H(+). It catalyses the reaction K(+)(in) + ATP + H2O = K(+)(out) + ADP + phosphate + H(+). Its function is as follows. Catalyzes the hydrolysis of ATP coupled with the export of sodium and potassium from the cell. May export potassium less efficiently. May transport other cations such as lithium. Sodium/potassium efflux ATPases are involved in salt tolerance and maintaining the membrane potential across the plasma membrane in high salinity (Na+) or alkaline (K+) environments. The chain is Sodium/potassium exporting P-type ATPase 2 from Saccharomyces cerevisiae (strain ATCC 204508 / S288c) (Baker's yeast).